The primary structure comprises 840 residues: DNA helicase MCM8 (840 aa).

Residues 16–54 form a disordered region; that stretch reads QSWKRGRGGGNFSGKWREREHRPDLSKTTGKRTSEQTPQ. The span at 30–40 shows a compositional bias: basic and acidic residues; the sequence is KWREREHRPDL. One can recognise an MCM domain in the interval 402–609; that stretch reads LFKLIVNSLC…HHDHLLSEHV (208 aa). 454 to 461 provides a ligand contact to ATP; it reads GDPGLGKS. Position 630 is a phosphoserine (Ser-630).

This sequence belongs to the MCM family. Component of the MCM8-MCM9 complex, which forms a hexamer composed of MCM8 and MCM9. Interacts with the DNA mismatch repair (MMR) complex composed at least of MSH2, MSH3, MSH6, PMS1 and MLH1. Interacts with RAD51; the interaction recruits RAD51 to DNA damage sites. Interacts with the MRN complex composed of MRE11, RAD50 and NBN/NBS1. Interacts with CDC6 and ORC2. Interacts with HROB; the interaction recruits the MCM8-MCM9 complex to DNA damage sites. As to expression, highest levels in placenta, lung and pancreas. Low levels in skeletal muscle and kidney. Expressed in various tumors with highest levels in colon and lung cancers.

It is found in the nucleus. It localises to the chromosome. The catalysed reaction is ATP + H2O = ADP + phosphate + H(+). Functionally, component of the MCM8-MCM9 complex, a complex involved in the repair of double-stranded DNA breaks (DBSs) and DNA interstrand cross-links (ICLs) by homologous recombination (HR). Required for DNA resection by the MRE11-RAD50-NBN/NBS1 (MRN) complex by recruiting the MRN complex to the repair site and by promoting the complex nuclease activity. Probably by regulating the localization of the MNR complex, indirectly regulates the recruitment of downstream effector RAD51 to DNA damage sites including DBSs and ICLs. The MCM8-MCM9 complex is dispensable for DNA replication and S phase progression. However, may play a non-essential for DNA replication: may be involved in the activation of the prereplicative complex (pre-RC) during G(1) phase by recruiting CDC6 to the origin recognition complex (ORC). Probably by regulating HR, plays a key role during gametogenesis. Stabilizes MCM9 protein. The protein is DNA helicase MCM8 (MCM8) of Homo sapiens (Human).